The sequence spans 181 residues: Ribosome maturation factor RimM (181 aa).

The 80-residue stretch at 98–177 (EGEFFYCDLV…KITTHNAKTL (80 aa)) folds into the PRC barrel domain.

The protein belongs to the RimM family. As to quaternary structure, binds ribosomal protein uS19.

The protein resides in the cytoplasm. Its function is as follows. An accessory protein needed during the final step in the assembly of 30S ribosomal subunit, possibly for assembly of the head region. Essential for efficient processing of 16S rRNA. May be needed both before and after RbfA during the maturation of 16S rRNA. It has affinity for free ribosomal 30S subunits but not for 70S ribosomes. This is Ribosome maturation factor RimM from Helicobacter pylori (strain HPAG1).